The following is a 213-amino-acid chain: Sclerostin (213 aa).

The first 23 residues, 1–23 (MQLPLALCLVCLLVHAAFRVVEG), serve as a signal peptide directing secretion. The interval 41–71 (GEYPEPPPELENNKTMNRAENGGRPPHHPFE) is disordered. N53 carries N-linked (GlcNAc...) asparagine glycosylation. Intrachain disulfides connect C80–C134, C94–C148, C105–C165, and C109–C167. The region spanning 82 to 172 (ELHFTRYVTD…ASCKCKRLTR (91 aa)) is the CTCK domain. N-linked (GlcNAc...) asparagine glycosylation is present at N175. Residues 178 to 213 (ELKDFGPEAARPQKGRKPRPRARGAKANQAELENAY) form a disordered region. Positions 190–201 (QKGRKPRPRARG) are enriched in basic residues.

It belongs to the sclerostin family. In terms of assembly, interacts with LRP4 (via the extracellular domain); the interaction facilitates the inhibition of Wnt signaling. Interacts with LRP5 (via the first two YWTD-EGF repeat domains); the interaction inhibits Wnt-mediated signaling. Interacts with LRP6.

Its subcellular location is the secreted. The protein resides in the extracellular space. It localises to the extracellular matrix. Functionally, negative regulator of bone growth that acts through inhibition of Wnt signaling and bone formation. This is Sclerostin from Chlorocebus aethiops (Green monkey).